Here is a 387-residue protein sequence, read N- to C-terminus: Monopolar spindle protein 2 (387 aa).

Residues 157-269 are a coiled coil; sequence KNIGKALEVQ…FLKDQIRRER (113 aa). Residues 216 to 235 are disordered; the sequence is RQVEDNQNSSRTSDPGSPLV. Residues 220-230 show a composition bias toward polar residues; it reads DNQNSSRTSDP. A helical transmembrane segment spans residues 311 to 327; it reads IRIIVCFALLAGVLPYI.

Belongs to the MPS2 family. In terms of assembly, interacts with BBP1, MPS3, and SPC24.

Its subcellular location is the nucleus membrane. It is found in the cytoplasm. The protein resides in the cytoskeleton. The protein localises to the microtubule organizing center. It localises to the spindle pole body. Functionally, component of the spindle pole body (SPB) required for insertion of the nascent SPB into the nuclear envelope and for the proper execution of spindle pole body (SPB) duplication. The polypeptide is Monopolar spindle protein 2 (MPS2) (Saccharomyces cerevisiae (strain FostersB) (Baker's yeast)).